Consider the following 971-residue polypeptide: Exportin-2 (971 aa).

One can recognise an Importin N-terminal domain in the interval 29-102 (AEKFLESVEG…KANIVNLMLS (74 aa)).

This sequence belongs to the XPO2/CSE1 family. As to quaternary structure, interacts with cftr.

The protein localises to the cytoplasm. It localises to the nucleus. In terms of biological role, export receptor for importin alpha. Mediates importin-alpha re-export from the nucleus to the cytoplasm after import substrates have been released into the nucleoplasm. Negatively regulates fluid secretion and plays a role in fluid homeostasis by down-regulating cftr activity. The polypeptide is Exportin-2 (cse1l) (Oreochromis niloticus (Nile tilapia)).